We begin with the raw amino-acid sequence, 185 residues long: uncharacterized protein (185 aa).

The first 18 residues, 1–18 (MLLKLILILCFLVTLSLS), serve as a signal peptide directing secretion. The tract at residues 30–185 (TQGPTIASGG…VQDCGEITGW (156 aa)) is disordered. Over residues 86–101 (RAQEGGKKDTTKEQPK) the composition is skewed to basic and acidic residues. Positions 103-116 (NNNNKNLGRHSSSG) are enriched in low complexity. Residues 117–135 (SGSGSGSGCGVTGDTGTGS) show a composition bias toward gly residues.

It is found in the secreted. This is an uncharacterized protein from Dictyostelium discoideum (Social amoeba).